Consider the following 212-residue polypeptide: Methylthioribulose-1-phosphate dehydratase (212 aa).

Residues H97 and H99 each coordinate Zn(2+).

This sequence belongs to the aldolase class II family. MtnB subfamily. In terms of assembly, homotetramer. Zn(2+) is required as a cofactor.

It carries out the reaction 5-(methylsulfanyl)-D-ribulose 1-phosphate = 5-methylsulfanyl-2,3-dioxopentyl phosphate + H2O. Its pathway is amino-acid biosynthesis; L-methionine biosynthesis via salvage pathway; L-methionine from S-methyl-5-thio-alpha-D-ribose 1-phosphate: step 2/6. Catalyzes the dehydration of methylthioribulose-1-phosphate (MTRu-1-P) into 2,3-diketo-5-methylthiopentyl-1-phosphate (DK-MTP-1-P). The polypeptide is Methylthioribulose-1-phosphate dehydratase (Bacillus cereus (strain ZK / E33L)).